A 521-amino-acid polypeptide reads, in one-letter code: MIKQALISVSDKSGIVDFAKSLSDLGVRILSTGGTAKLLADAGLSVTEVADYTGFPEMLDGRVKTLHPKVHGGILARRDLPEHMAALEKHDIPTIDLLVVNLYPFVQTVSKEECSLEDAIENIDIGGPTMLRSAAKNHRDVTVVVDPADYAVVLDEMRANSNAVSYKTNFRLATKVFAHTAQYDGAITNYLTSLTDELQHSSRNAYPATFNLAFNKAQDLRYGENPHQSAAFYRDLSVPAGALANYNQLQGKELSYNNIADSDAAWECVKTFDVPACVIVKHANPCGVAVGADANEAYAKAFQTDPTSAFGGIIAFNREVDEAAAQAVARQFVEVLIAPSFSAAARQVFAAKQNVRLLEIALGDGHNAFDLKRVGGGLLVQSLDSKNVQPRELRVVTKRHPTPKEMDDLLFAWRVAKYVKSNAIVFCGNGMTLGVGAGQMSRVDSARIASIKAQNAGLTLAGSAVASDAFFPFRDGLDVVVAAGATCVIQPGGSMRDEEVVSAADEHNIAMVLTGVRHFRH.

Positions 1–145 (MIKQALISVS…KNHRDVTVVV (145 aa)) constitute an MGS-like domain.

The protein belongs to the PurH family.

It catalyses the reaction (6R)-10-formyltetrahydrofolate + 5-amino-1-(5-phospho-beta-D-ribosyl)imidazole-4-carboxamide = 5-formamido-1-(5-phospho-D-ribosyl)imidazole-4-carboxamide + (6S)-5,6,7,8-tetrahydrofolate. It carries out the reaction IMP + H2O = 5-formamido-1-(5-phospho-D-ribosyl)imidazole-4-carboxamide. It participates in purine metabolism; IMP biosynthesis via de novo pathway; 5-formamido-1-(5-phospho-D-ribosyl)imidazole-4-carboxamide from 5-amino-1-(5-phospho-D-ribosyl)imidazole-4-carboxamide (10-formyl THF route): step 1/1. Its pathway is purine metabolism; IMP biosynthesis via de novo pathway; IMP from 5-formamido-1-(5-phospho-D-ribosyl)imidazole-4-carboxamide: step 1/1. This is Bifunctional purine biosynthesis protein PurH from Paraburkholderia xenovorans (strain LB400).